The sequence spans 208 residues: Large ribosomal subunit protein uL3 (208 aa).

Residues 116 to 148 (GFQGVIKRHGQSRGPMAHGSRYHRRPGSMGPVA) are disordered.

This sequence belongs to the universal ribosomal protein uL3 family. In terms of assembly, part of the 50S ribosomal subunit. Forms a cluster with proteins L14 and L19.

One of the primary rRNA binding proteins, it binds directly near the 3'-end of the 23S rRNA, where it nucleates assembly of the 50S subunit. This Streptococcus pyogenes serotype M6 (strain ATCC BAA-946 / MGAS10394) protein is Large ribosomal subunit protein uL3.